Reading from the N-terminus, the 380-residue chain is MAPNIRKSHPLLKMINNSLIDLPTPSNISAWWNFGSLLAVCFMTQIITGLLLAMHYTADTSLAFSSVAHTCRNVQYGWLIRNLHANGASFFFICIYLHIGRGLYYGSYLYKETWNTGVILLLTLMATAFVGYVLPWGQMSFWGATVITNLFSAIPYIGQTLVEWAWGGFSVDNPTLTRFFALHFLLPFVIAGITIIHLTFLHESGSNNPLGISSNSDKIPFHPYYSIKDILGLTLMLTPLLTLALFSPNLLGDPENFTPANPLVTPPHIKPEWYFLFAYAILRSIPNKLGGVLALAASVLILLLIPFLHKSKQRTMTFRPFSQLLFWLLVANLLILTWVGSQPVEHPFIIIGQLASLSYFTTLLILFPMIGTLENKMLNH.

Transmembrane regions (helical) follow at residues 34-54 (FGSL…LLAM), 78-99 (WLIR…YLHI), 114-134 (WNTG…GYVL), and 179-199 (FFAL…IHLT). Positions 84 and 98 each coordinate heme b. Heme b contacts are provided by His183 and His197. His202 contacts a ubiquinone. The next 4 membrane-spanning stretches (helical) occupy residues 227 to 247 (IKDI…ALFS), 289 to 309 (LGGV…PFLH), 321 to 341 (FSQL…WVGS), and 348 to 368 (FIII…ILFP).

Belongs to the cytochrome b family. As to quaternary structure, the cytochrome bc1 complex contains 11 subunits: 3 respiratory subunits (MT-CYB, CYC1 and UQCRFS1), 2 core proteins (UQCRC1 and UQCRC2) and 6 low-molecular weight proteins (UQCRH/QCR6, UQCRB/QCR7, UQCRQ/QCR8, UQCR10/QCR9, UQCR11/QCR10 and a cleavage product of UQCRFS1). This cytochrome bc1 complex then forms a dimer. Heme b serves as cofactor.

The protein resides in the mitochondrion inner membrane. Functionally, component of the ubiquinol-cytochrome c reductase complex (complex III or cytochrome b-c1 complex) that is part of the mitochondrial respiratory chain. The b-c1 complex mediates electron transfer from ubiquinol to cytochrome c. Contributes to the generation of a proton gradient across the mitochondrial membrane that is then used for ATP synthesis. This chain is Cytochrome b (MT-CYB), found in Numida meleagris (Helmeted guineafowl).